A 203-amino-acid chain; its full sequence is Urease accessory protein UreG (203 aa).

GTP is bound at residue 14 to 21 (GPVGSGKT).

The protein belongs to the SIMIBI class G3E GTPase family. UreG subfamily. In terms of assembly, homodimer. UreD, UreF and UreG form a complex that acts as a GTP-hydrolysis-dependent molecular chaperone, activating the urease apoprotein by helping to assemble the nickel containing metallocenter of UreC. The UreE protein probably delivers the nickel.

The protein resides in the cytoplasm. Functionally, facilitates the functional incorporation of the urease nickel metallocenter. This process requires GTP hydrolysis, probably effectuated by UreG. In Allorhizobium ampelinum (strain ATCC BAA-846 / DSM 112012 / S4) (Agrobacterium vitis (strain S4)), this protein is Urease accessory protein UreG.